Here is a 491-residue protein sequence, read N- to C-terminus: Anthranilate synthase component 1 (491 aa).

L-tryptophan-binding positions include Ser-49 and 271-273; that span reads PYL. Chorismate is bound at residue 306-307; that stretch reads GT. Position 333 (Glu-333) interacts with Mg(2+). Residues Tyr-421, Arg-441, 455–457, and Gly-457 contribute to the chorismate site; that span reads GAG. Glu-470 contacts Mg(2+).

It belongs to the anthranilate synthase component I family. Heterotetramer consisting of two non-identical subunits: a beta subunit (TrpG) and a large alpha subunit (TrpE). The cofactor is Mg(2+).

The enzyme catalyses chorismate + L-glutamine = anthranilate + pyruvate + L-glutamate + H(+). Its pathway is amino-acid biosynthesis; L-tryptophan biosynthesis; L-tryptophan from chorismate: step 1/5. Its activity is regulated as follows. Feedback inhibited by tryptophan. In terms of biological role, part of a heterotetrameric complex that catalyzes the two-step biosynthesis of anthranilate, an intermediate in the biosynthesis of L-tryptophan. In the first step, the glutamine-binding beta subunit (TrpG) of anthranilate synthase (AS) provides the glutamine amidotransferase activity which generates ammonia as a substrate that, along with chorismate, is used in the second step, catalyzed by the large alpha subunit of AS (TrpE) to produce anthranilate. In the absence of TrpG, TrpE can synthesize anthranilate directly from chorismate and high concentrations of ammonia. The chain is Anthranilate synthase component 1 (trpE) from Neisseria meningitidis serogroup B (strain ATCC BAA-335 / MC58).